The sequence spans 319 residues: Homeobox protein Hox-B5a (319 aa).

The interval 114 to 224 is disordered; it reads SLLSPGSGDT…NTVGSEGQPP (111 aa). Low complexity predominate over residues 128–155; sequence RSSSPRSEQSGSGNLSSTNLSSSTNISS. Positions 226–231 match the Antp-type hexapeptide motif; the sequence is IFPWMR. The homeobox DNA-binding region spans 244-303; sequence GKRARTAYTRYQTLELEKEFHFNRYLTRRRRIEIAHALCLTERQIKIWFQNRRMKWKKDN.

It belongs to the Antp homeobox family.

Its subcellular location is the nucleus. In terms of biological role, sequence-specific transcription factor which is part of a developmental regulatory system that provides cells with specific positional identities on the anterior-posterior axis. This Takifugu rubripes (Japanese pufferfish) protein is Homeobox protein Hox-B5a (hoxb5a).